A 221-amino-acid chain; its full sequence is Serotriflin (221 aa).

Residues 19 to 147 form the SCP domain; that stretch reads LDKHNALRRS…SYNYYYVCHY (129 aa). A glycan (N-linked (GlcNAc...) asparagine) is linked at N48. 8 disulfide bridges follow: C56-C134, C73-C148, C129-C145, C167-C174, C170-C179, C183-C216, C192-C210, and C201-C214. The ShKT domain maps to 183–216; the sequence is CKHVDRYSNCNSLVQQISCQSNNMNTDCPASCFC.

In terms of assembly, forms a stable, non-covalent complex with SSP-2.

The protein localises to the secreted. The protein is Serotriflin of Protobothrops flavoviridis (Habu).